Here is a 324-residue protein sequence, read N- to C-terminus: Homeobox protein engrailed-2 (324 aa).

3 disordered regions span residues 1 to 59, 89 to 174, and 215 to 240; these read MEEK…HQHP, GGAR…VLKA, and DRPS…RPRT. The segment covering 89-110 has biased composition (gly residues); it reads GGARGGEGGAGTTEGGGGGAGG. Residues 235–294 constitute a DNA-binding region (homeobox); the sequence is DKRPRTAFTAEQLQRLKAEFQTNRYLTEQRRQSLAQELSLNESQIKIWFQNKRAKIKKAT.

It belongs to the engrailed homeobox family. In terms of tissue distribution, cerebellar granule cells.

The protein resides in the nucleus. This chain is Homeobox protein engrailed-2 (En2), found in Mus musculus (Mouse).